Here is a 179-residue protein sequence, read N- to C-terminus: Large ribosomal subunit protein uL5 (179 aa).

This sequence belongs to the universal ribosomal protein uL5 family. As to quaternary structure, part of the 50S ribosomal subunit; part of the 5S rRNA/L5/L18/L25 subcomplex. Contacts the 5S rRNA and the P site tRNA. Forms a bridge to the 30S subunit in the 70S ribosome.

This is one of the proteins that bind and probably mediate the attachment of the 5S RNA into the large ribosomal subunit, where it forms part of the central protuberance. In the 70S ribosome it contacts protein S13 of the 30S subunit (bridge B1b), connecting the 2 subunits; this bridge is implicated in subunit movement. Contacts the P site tRNA; the 5S rRNA and some of its associated proteins might help stabilize positioning of ribosome-bound tRNAs. This chain is Large ribosomal subunit protein uL5, found in Desulfitobacterium hafniense (strain Y51).